The primary structure comprises 598 residues: Elongation factor 4 (598 aa).

The region spanning 2–184 is the tr-type G domain; it reads KNIRNFSIIA…EIVHKIPAPE (183 aa). GTP contacts are provided by residues 14 to 19 and 131 to 134; these read DHGKST and NKID.

It belongs to the TRAFAC class translation factor GTPase superfamily. Classic translation factor GTPase family. LepA subfamily.

It localises to the cell inner membrane. The catalysed reaction is GTP + H2O = GDP + phosphate + H(+). Functionally, required for accurate and efficient protein synthesis under certain stress conditions. May act as a fidelity factor of the translation reaction, by catalyzing a one-codon backward translocation of tRNAs on improperly translocated ribosomes. Back-translocation proceeds from a post-translocation (POST) complex to a pre-translocation (PRE) complex, thus giving elongation factor G a second chance to translocate the tRNAs correctly. Binds to ribosomes in a GTP-dependent manner. The chain is Elongation factor 4 from Pasteurella multocida (strain Pm70).